We begin with the raw amino-acid sequence, 405 residues long: L-carnitine CoA-transferase (405 aa).

Positions 97 and 104 each coordinate CoA. Residue Asp-169 is the Nucleophile of the active site.

Belongs to the CoA-transferase III family. CaiB subfamily. In terms of assembly, homodimer.

Its subcellular location is the cytoplasm. The catalysed reaction is crotonobetainyl-CoA + (R)-carnitine = crotonobetaine + (R)-carnitinyl-CoA. It catalyses the reaction 4-(trimethylamino)butanoyl-CoA + (R)-carnitine = (R)-carnitinyl-CoA + 4-(trimethylamino)butanoate. Its pathway is amine and polyamine metabolism; carnitine metabolism. In terms of biological role, catalyzes the reversible transfer of the CoA moiety from gamma-butyrobetainyl-CoA to L-carnitine to generate L-carnitinyl-CoA and gamma-butyrobetaine. Is also able to catalyze the reversible transfer of the CoA moiety from gamma-butyrobetainyl-CoA or L-carnitinyl-CoA to crotonobetaine to generate crotonobetainyl-CoA. This Salmonella typhi protein is L-carnitine CoA-transferase (caiB).